Consider the following 155-residue polypeptide: Ribosomal RNA large subunit methyltransferase H (155 aa).

Residues Gly-104 and 123–128 each bind S-adenosyl-L-methionine; that span reads LGPMTF.

The protein belongs to the RNA methyltransferase RlmH family. In terms of assembly, homodimer.

Its subcellular location is the cytoplasm. It carries out the reaction pseudouridine(1915) in 23S rRNA + S-adenosyl-L-methionine = N(3)-methylpseudouridine(1915) in 23S rRNA + S-adenosyl-L-homocysteine + H(+). In terms of biological role, specifically methylates the pseudouridine at position 1915 (m3Psi1915) in 23S rRNA. The chain is Ribosomal RNA large subunit methyltransferase H from Nitratidesulfovibrio vulgaris (strain DSM 19637 / Miyazaki F) (Desulfovibrio vulgaris).